Here is a 103-residue protein sequence, read N- to C-terminus: V-type ATP synthase subunit F (103 aa).

This sequence belongs to the V-ATPase F subunit family.

Its function is as follows. Produces ATP from ADP in the presence of a proton gradient across the membrane. The chain is V-type ATP synthase subunit F from Clostridium botulinum (strain Alaska E43 / Type E3).